A 334-amino-acid chain; its full sequence is MPEPVKVLVTGAAGQIAYSLLFGIAKGDVFGKDQPLILVLLDITPMMTVLEGVVMELQDCALPLLKEVIATDKEDVAFKDLDVAILVGSMPRREGMERKDLLKANVKIFKSQGAALNKYSKKSVKVIVVGNPANTNCLTALKSAPSIPKENFSCLTRLDHNRAKAQIALKLNVASDDVKNVIIWGNHSSTQYPDASHASVTLQGKDVGAFEAVKNDDWLKGGFITTVQQRGAAVIKARKLSSAMSAAKAICDHVRDIWFGTPEGQFVSMGVISDGNSYGVPEDLMYSFPLTIKNKTWKIVEGLCINDFSREKMDITAKELQDEKETAFEFLSSE.

Residue 11–17 (GAAGQIA) participates in NAD(+) binding. 2 residues coordinate substrate: R92 and R98. NAD(+) contacts are provided by residues N105, Q112, and 129-131 (VGN). Substrate-binding residues include N131 and R162. H187 serves as the catalytic Proton acceptor.

This sequence belongs to the LDH/MDH superfamily. MDH type 2 family. As to quaternary structure, homodimer.

The protein localises to the cytoplasm. It is found in the cytosol. The enzyme catalyses (S)-malate + NAD(+) = oxaloacetate + NADH + H(+). It carries out the reaction (S)-2-hydroxyglutarate + NAD(+) = 2-oxoglutarate + NADH + H(+). Catalyzes the reduction of aromatic alpha-keto acids in the presence of NADH. Plays essential roles in the malate-aspartate shuttle and the tricarboxylic acid cycle, important in mitochondrial NADH supply for oxidative phosphorylation. Catalyzes the reduction of 2-oxoglutarate to 2-hydroxyglutarate, leading to elevated reactive oxygen species (ROS). The sequence is that of Malate dehydrogenase, cytoplasmic (mdh1) from Xenopus laevis (African clawed frog).